Consider the following 279-residue polypeptide: Diaminopimelate epimerase (279 aa).

Residues asparagine 12, glutamine 45, and asparagine 65 each contribute to the substrate site. The active-site Proton donor is the cysteine 74. Residues 75-76 (GN), asparagine 162, asparagine 195, and 213-214 (ER) contribute to the substrate site. The Proton acceptor role is filled by cysteine 222. 223–224 (GT) contributes to the substrate binding site.

It belongs to the diaminopimelate epimerase family. Homodimer.

Its subcellular location is the cytoplasm. It carries out the reaction (2S,6S)-2,6-diaminopimelate = meso-2,6-diaminopimelate. The protein operates within amino-acid biosynthesis; L-lysine biosynthesis via DAP pathway; DL-2,6-diaminopimelate from LL-2,6-diaminopimelate: step 1/1. Functionally, catalyzes the stereoinversion of LL-2,6-diaminopimelate (L,L-DAP) to meso-diaminopimelate (meso-DAP), a precursor of L-lysine and an essential component of the bacterial peptidoglycan. The sequence is that of Diaminopimelate epimerase from Shewanella woodyi (strain ATCC 51908 / MS32).